Here is an 874-residue protein sequence, read N- to C-terminus: MKAAEIREKFLKFFESKGHTIVRSSSLVPGNDPTLLFTNSGMVQFKDVFLGAETRPYSRATTAQRSVRAGGKHNDLENVGYTARHHTFFEMLGNFSFGDYFKRDAIHYAWELLTTVYKLPADKLWVTVYHDDDEAYDIWAKEVGVPAERIIRIGDNKGARYASDNFWQMGDTGPCGPCSEIFYDHGPGVWGGPPGSPEEDGDRYIEIWNLVFMQFNRDAQGNMTRLPKPCVDTGMGLERIAAVLQHVHSNYEIDLFQQLIKASARETGVADLANNSLKVIADHIRACSFLIVDGVIPGNEGRGYVLRRIVRRAIRHGYKLGRKGPFFHKLVADLVAEMGAAYPELKEAEQRVTDVLRQEEERFFETIEHGMSILEAALADLDAAGGKTLDGELAFKLHDTYGFPLDLTADVCRERGVTVDEPAFDDAMARQREQARAAGKFKATQGLEYTGAKTTFHGYEEIAFDDAKVVALYVEGASVGEVKAGESAVVVLDHTPFYAESGGQVGDQGVLANAATRFAVADTLKVQADVIGHHGELEQGVLKVGDAVRAEIDAARRARTARNHSATHLMHKALRDVLGSHVQQKGSLVDADKTRFDFAHNAPLTDDEIRRVEAIVNEQVLANAPGIVRVMPYDDAVKGGAMALFGEKYGDEVRVLDLGFSRELCGGTHVHRTGDIGLFKIVAEGGVAAGIRRVEAITGDNAVRYVQALDARVNAAAAALKAQPSELIQRIGQVQDQVKSLEKELGALKSKLASSQGDELAQQAVEVGGVHVLAATLDGADAKTLRETVDKLKDKLKSAAIVLAAVDGGKVSLIAGVTADASKKVKAGELVNFVAQQVGGKGGGRPDMAQAGGTEPANLPAALAGVKGWVEERL.

Zn(2+) contacts are provided by His-564, His-568, Cys-665, and His-669.

It belongs to the class-II aminoacyl-tRNA synthetase family. Zn(2+) serves as cofactor.

It is found in the cytoplasm. It carries out the reaction tRNA(Ala) + L-alanine + ATP = L-alanyl-tRNA(Ala) + AMP + diphosphate. Catalyzes the attachment of alanine to tRNA(Ala) in a two-step reaction: alanine is first activated by ATP to form Ala-AMP and then transferred to the acceptor end of tRNA(Ala). Also edits incorrectly charged Ser-tRNA(Ala) and Gly-tRNA(Ala) via its editing domain. The polypeptide is Alanine--tRNA ligase (Burkholderia thailandensis (strain ATCC 700388 / DSM 13276 / CCUG 48851 / CIP 106301 / E264)).